Here is a 151-residue protein sequence, read N- to C-terminus: ATP synthase subunit b' (151 aa).

A helical transmembrane segment spans residues 18-38; the sequence is TLPLMALQVVLLTFILNALFF.

Belongs to the ATPase B chain family. In terms of assembly, F-type ATPases have 2 components, F(1) - the catalytic core - and F(0) - the membrane proton channel. F(1) has five subunits: alpha(3), beta(3), gamma(1), delta(1), epsilon(1). F(0) has four main subunits: a(1), b(1), b'(1) and c(10-14). The alpha and beta chains form an alternating ring which encloses part of the gamma chain. F(1) is attached to F(0) by a central stalk formed by the gamma and epsilon chains, while a peripheral stalk is formed by the delta, b and b' chains.

The protein resides in the cellular thylakoid membrane. Functionally, f(1)F(0) ATP synthase produces ATP from ADP in the presence of a proton or sodium gradient. F-type ATPases consist of two structural domains, F(1) containing the extramembraneous catalytic core and F(0) containing the membrane proton channel, linked together by a central stalk and a peripheral stalk. During catalysis, ATP synthesis in the catalytic domain of F(1) is coupled via a rotary mechanism of the central stalk subunits to proton translocation. Component of the F(0) channel, it forms part of the peripheral stalk, linking F(1) to F(0). The b'-subunit is a diverged and duplicated form of b found in plants and photosynthetic bacteria. In Prochlorococcus marinus (strain MIT 9313), this protein is ATP synthase subunit b'.